The chain runs to 631 residues: Iron transport multicopper oxidase FET3 (631 aa).

Residues 1-25 form the signal peptide; the sequence is MKVSTHHFLPSLLVALWSWATVAQA. Topologically, residues 26 to 564 are extracellular; sequence ATHTFNWTTG…ANIPDGFTAK (539 aa). 2 N-linked (GlcNAc...) asparagine glycosylation sites follow: asparagine 31 and asparagine 81. Plastocyanin-like domains lie at 50–148 and 195–297; these read ITCN…LVVE and NLII…LMLN. Positions 85 and 87 each coordinate Cu cation. N-linked (GlcNAc...) asparagine glycosylation is found at asparagine 92 and asparagine 117. Positions 130 and 132 each coordinate Cu cation. N-linked (GlcNAc...) asparagine glycans are attached at residues asparagine 199, asparagine 203, asparagine 249, asparagine 270, asparagine 297, asparagine 364, and asparagine 413. The region spanning 387-506 is the Plastocyanin-like 3 domain; that stretch reads NPLVYGTNTN…QGLALLLIEA (120 aa). The Cu cation site is built by histidine 418, histidine 421, histidine 423, histidine 488, cysteine 489, histidine 490, and histidine 494. A helical membrane pass occupies residues 565 to 585; it reads GIVAMTFSCLAGVLGLISLST. Topologically, residues 586 to 630 are cytoplasmic; sequence YGLMGVKKSEEEIIRDLGMDPDAVEKVDVSDINSDEDSSRTSKNI. Positions 610 to 631 are disordered; that stretch reads EKVDVSDINSDEDSSRTSKNIE. Basic and acidic residues predominate over residues 622–631; sequence DSSRTSKNIE.

This sequence belongs to the multicopper oxidase family. Requires Cu cation as cofactor.

The protein resides in the cell membrane. Its function is as follows. Iron transport multicopper ferroxidase required for Fe(2+) high affinity uptake. Required to oxidize Fe(2+) and release it from the transporter. Essential component of copper-dependent iron transport. The polypeptide is Iron transport multicopper oxidase FET3 (FET3) (Kluyveromyces lactis (strain ATCC 8585 / CBS 2359 / DSM 70799 / NBRC 1267 / NRRL Y-1140 / WM37) (Yeast)).